Reading from the N-terminus, the 133-residue chain is Ribonuclease P protein component (133 aa).

Belongs to the RnpA family. In terms of assembly, consists of a catalytic RNA component (M1 or rnpB) and a protein subunit.

It carries out the reaction Endonucleolytic cleavage of RNA, removing 5'-extranucleotides from tRNA precursor.. In terms of biological role, RNaseP catalyzes the removal of the 5'-leader sequence from pre-tRNA to produce the mature 5'-terminus. It can also cleave other RNA substrates such as 4.5S RNA. The protein component plays an auxiliary but essential role in vivo by binding to the 5'-leader sequence and broadening the substrate specificity of the ribozyme. This is Ribonuclease P protein component from Bartonella quintana (strain Toulouse) (Rochalimaea quintana).